Consider the following 295-residue polypeptide: Small ribosomal subunit protein uS2 (295 aa).

The tract at residues 263–295 (KKFSKTKNIDEETNTEFEKALNDADENKNSDNA) is disordered. Positions 278-295 (EFEKALNDADENKNSDNA) are enriched in basic and acidic residues.

This sequence belongs to the universal ribosomal protein uS2 family.

In Rickettsia peacockii (strain Rustic), this protein is Small ribosomal subunit protein uS2.